Reading from the N-terminus, the 74-residue chain is Protein F9 homolog (74 aa).

Residues 1–34 (GHAAANCALARVATALTRRVPASRHGLAEGGTPP) are Virion surface-facing. The helical transmembrane segment at 35-55 (WTLLLAVAAVAVLGVVAISLL) threads the bilayer. The Intravirion portion of the chain corresponds to 56-73 (RRALRIRFRYSKSIQTLR).

It belongs to the chordopoxvirinae L1 protein family.

The protein localises to the virion membrane. This chain is Protein F9 homolog, found in Capra hircus (Goat).